A 134-amino-acid polypeptide reads, in one-letter code: Profilin-2 (134 aa).

An intrachain disulfide couples Cys13 to Cys118. The Involved in PIP2 interaction signature appears at 84–100 (AVIRGKKGSGGITIKKT). A Phosphothreonine modification is found at Thr114.

This sequence belongs to the profilin family. As to quaternary structure, occurs in many kinds of cells as a complex with monomeric actin in a 1:1 ratio. Phosphorylated by MAP kinases.

The protein resides in the cytoplasm. It is found in the cytoskeleton. Functionally, binds to actin and affects the structure of the cytoskeleton. At high concentrations, profilin prevents the polymerization of actin, whereas it enhances it at low concentrations. The sequence is that of Profilin-2 from Olea europaea (Common olive).